The primary structure comprises 89 residues: Large ribosomal subunit protein eL34 (89 aa).

Residues 1–22 form a disordered region; that stretch reads MPAPRYKSGSSKKVYRKAPGNS.

Belongs to the eukaryotic ribosomal protein eL34 family.

The sequence is that of Large ribosomal subunit protein eL34 from Methanococcus maripaludis (strain DSM 14266 / JCM 13030 / NBRC 101832 / S2 / LL).